The chain runs to 190 residues: Potassium-transporting ATPase KdpC subunit (190 aa).

A helical transmembrane segment spans residues Val13–Ile33.

The protein belongs to the KdpC family. As to quaternary structure, the system is composed of three essential subunits: KdpA, KdpB and KdpC.

It is found in the cell membrane. In terms of biological role, part of the high-affinity ATP-driven potassium transport (or Kdp) system, which catalyzes the hydrolysis of ATP coupled with the electrogenic transport of potassium into the cytoplasm. This subunit acts as a catalytic chaperone that increases the ATP-binding affinity of the ATP-hydrolyzing subunit KdpB by the formation of a transient KdpB/KdpC/ATP ternary complex. This is Potassium-transporting ATPase KdpC subunit from Listeria welshimeri serovar 6b (strain ATCC 35897 / DSM 20650 / CCUG 15529 / CIP 8149 / NCTC 11857 / SLCC 5334 / V8).